The following is a 262-amino-acid chain: Pimeloyl-[acyl-carrier protein] methyl ester esterase (262 aa).

The AB hydrolase-1 domain maps to 15–242; it reads HLVLLHGWGL…AAHAPFISHP (228 aa). Substrate is bound by residues Trp22, 82 to 83, and 143 to 147; these read SL and FLALQ. Ser82 acts as the Nucleophile in catalysis. Catalysis depends on residues Asp207 and His235. Residue His235 coordinates substrate.

It belongs to the AB hydrolase superfamily. Carboxylesterase BioH family. As to quaternary structure, monomer.

It is found in the cytoplasm. The enzyme catalyses 6-carboxyhexanoyl-[ACP] methyl ester + H2O = 6-carboxyhexanoyl-[ACP] + methanol + H(+). Its pathway is cofactor biosynthesis; biotin biosynthesis. In terms of biological role, the physiological role of BioH is to remove the methyl group introduced by BioC when the pimeloyl moiety is complete. It allows to synthesize pimeloyl-ACP via the fatty acid synthetic pathway through the hydrolysis of the ester bonds of pimeloyl-ACP esters. The sequence is that of Pimeloyl-[acyl-carrier protein] methyl ester esterase from Shigella flexneri.